We begin with the raw amino-acid sequence, 348 residues long: Probable dual-specificity RNA methyltransferase RlmN (348 aa).

Glutamate 92 acts as the Proton acceptor in catalysis. The 234-residue stretch at 98–331 folds into the Radical SAM core domain; it reads HPDRVTACIS…NEIRREKGTD (234 aa). Cysteine 105 and cysteine 336 form a disulfide bridge. Positions 112, 116, and 119 each coordinate [4Fe-4S] cluster. S-adenosyl-L-methionine-binding positions include 159–160, serine 191, 214–216, and asparagine 290; these read GE and SLH. Cysteine 336 acts as the S-methylcysteine intermediate in catalysis.

This sequence belongs to the radical SAM superfamily. RlmN family. The cofactor is [4Fe-4S] cluster.

Its subcellular location is the cytoplasm. It carries out the reaction adenosine(2503) in 23S rRNA + 2 reduced [2Fe-2S]-[ferredoxin] + 2 S-adenosyl-L-methionine = 2-methyladenosine(2503) in 23S rRNA + 5'-deoxyadenosine + L-methionine + 2 oxidized [2Fe-2S]-[ferredoxin] + S-adenosyl-L-homocysteine. It catalyses the reaction adenosine(37) in tRNA + 2 reduced [2Fe-2S]-[ferredoxin] + 2 S-adenosyl-L-methionine = 2-methyladenosine(37) in tRNA + 5'-deoxyadenosine + L-methionine + 2 oxidized [2Fe-2S]-[ferredoxin] + S-adenosyl-L-homocysteine. Specifically methylates position 2 of adenine 2503 in 23S rRNA and position 2 of adenine 37 in tRNAs. This is Probable dual-specificity RNA methyltransferase RlmN from Fervidobacterium nodosum (strain ATCC 35602 / DSM 5306 / Rt17-B1).